Reading from the N-terminus, the 429-residue chain is MDIKYNELVNQFAPGAKQITIKKIRKKGNGIFSLNRYTSGTVLLEVPLENIICRKTVEQFRNSCDKFASIATLEEWNDMSFRTQAMLFLCYLWLGIQPRTNKWDKFLTVLPLSINTPAQWPEKEVYSLQGTSIFNPVCVKRKILQQEWLSLNQRYSDSWPSKITLPKWVHADALFHSRCLESPFKDPVLAPVIDLCNHSSKSNAKWSFSEDAMQLYLDKDIDENEEVTINYGSEKGSAEFLFSYGFLPEPEGDRITNVMKLLIPEDSNDSLDLAKRRSCKTPPMIEFVSDSSGELWWHAPFLFFSVLNVEDFTNFKMVCDESKAQTVDWEFEGQKCSVEDLPKLVQLSPKRDLYILRVFCLAEQLADAALNTNIENMYNPTERRSESVELLKRESFLLKKVLLYLRDVISKLLKSKVVVEFIHSQTIES.

The SET domain maps to 17-232 (KQITIKKIRK…ENEEVTINYG (216 aa)).

This sequence belongs to the class V-like SAM-binding methyltransferase superfamily.

The protein resides in the cytoplasm. It is found in the nucleus. In Schizosaccharomyces pombe (strain 972 / ATCC 24843) (Fission yeast), this protein is SET domain-containing protein 8 (set8).